The sequence spans 380 residues: Putative 8-amino-7-oxononanoate synthase (380 aa).

Arginine 18 provides a ligand contact to substrate. Position 106–107 (106–107 (GY)) interacts with pyridoxal 5'-phosphate. Histidine 131 contributes to the substrate binding site. Pyridoxal 5'-phosphate-binding positions include serine 179, 205–208 (DEAH), and 236–239 (TFGK). Lysine 239 is modified (N6-(pyridoxal phosphate)lysine). Threonine 352 is a substrate binding site.

Belongs to the class-II pyridoxal-phosphate-dependent aminotransferase family. BioF subfamily. As to quaternary structure, homodimer. Requires pyridoxal 5'-phosphate as cofactor.

The catalysed reaction is 6-carboxyhexanoyl-[ACP] + L-alanine + H(+) = (8S)-8-amino-7-oxononanoate + holo-[ACP] + CO2. Its pathway is cofactor biosynthesis; biotin biosynthesis. In terms of biological role, catalyzes the decarboxylative condensation of pimeloyl-[acyl-carrier protein] and L-alanine to produce 8-amino-7-oxononanoate (AON), [acyl-carrier protein], and carbon dioxide. The protein is Putative 8-amino-7-oxononanoate synthase (bioF) of Neisseria meningitidis serogroup B (strain ATCC BAA-335 / MC58).